The following is a 246-amino-acid chain: tRNA (guanine-N(1)-)-methyltransferase (246 aa).

Residues glycine 112 and 131 to 136 each bind S-adenosyl-L-methionine; that span reads IGDYVL.

The protein belongs to the RNA methyltransferase TrmD family. In terms of assembly, homodimer.

The protein resides in the cytoplasm. It catalyses the reaction guanosine(37) in tRNA + S-adenosyl-L-methionine = N(1)-methylguanosine(37) in tRNA + S-adenosyl-L-homocysteine + H(+). Its function is as follows. Specifically methylates guanosine-37 in various tRNAs. This chain is tRNA (guanine-N(1)-)-methyltransferase, found in Thermosipho melanesiensis (strain DSM 12029 / CIP 104789 / BI429).